The chain runs to 72 residues: MEKLTSLLLVAALLMLTQTLIQGGGEDRPNKKFLQKIKSTAKRECTAPSGYCDYPEECCEVECGRHYCDWWY.

Residues 1–23 (MEKLTSLLLVAALLMLTQTLIQG) form the signal peptide. A propeptide spanning residues 24–41 (GGEDRPNKKFLQKIKSTA) is cleaved from the precursor. 3 disulfide bridges follow: Cys45-Cys59, Cys52-Cys63, and Cys58-Cys68.

It belongs to the conotoxin O2 superfamily. As to expression, expressed by the venom duct.

It is found in the secreted. The sequence is that of Conotoxin LiC53 from Conus lividus (Livid cone).